The following is a 193-amino-acid chain: Thymidine kinase (193 aa).

Residues 16–23 and 89–92 each bind ATP; these read GPMFSGKS and DEIQ. The active-site Proton acceptor is glutamate 90. Zn(2+) contacts are provided by cysteine 146, cysteine 149, cysteine 184, and cysteine 187.

Belongs to the thymidine kinase family. As to quaternary structure, homotetramer.

Its subcellular location is the cytoplasm. It carries out the reaction thymidine + ATP = dTMP + ADP + H(+). In Thermoanaerobacter pseudethanolicus (strain ATCC 33223 / 39E) (Clostridium thermohydrosulfuricum), this protein is Thymidine kinase.